The following is a 49-amino-acid chain: uncharacterized protein (49 aa).

This is an uncharacterized protein from Homo sapiens (Human).